Consider the following 302-residue polypeptide: Vacuolar iron transporter (302 aa).

At 1–70 the chain is on the cytoplasmic side; the sequence is MPASGAGYAG…HTNTSSDYVK (70 aa). A helical membrane pass occupies residues 71 to 91; it reads AVVFGGLDGIVTIFAIVAGCV. At 92–99 the chain is on the vacuolar side; the sequence is GADLSCSQ. Residues 100-120 form a helical membrane-spanning segment; sequence VLMVGLGNLLADAISMGFGEY. The Cytoplasmic portion of the chain corresponds to 121–211; it reads VSAAAEKDFV…IKRGLVMFTA (91 aa). Fe cation contacts are provided by glutamate 137, glutamate 140, glutamate 148, glutamate 151, methionine 185, and glutamate 189. The chain crosses the membrane as a helical span at residues 212–232; the sequence is FCFFGLLPLAGFIGWVAAFGL. The Vacuolar portion of the chain corresponds to 233 to 235; it reads GAE. A helical membrane pass occupies residues 236-256; sequence ADMAFLMACVVSIMTLFILGF. The Cytoplasmic segment spans residues 257–276; that stretch reads SKGKFVGQNPTKSACLMAMN. The chain crosses the membrane as a helical span at residues 277-297; it reads GGCAGTVAYGVGSLLQLVVGA. Residues 298 to 302 are Vacuolar-facing; sequence NLTAA.

It belongs to the CCC1 family.

Its subcellular location is the vacuole membrane. It carries out the reaction Fe(2+)(in) = Fe(2+)(out). Its function is as follows. Vacuolar iron transporter involved in the transfer of iron ions from the cytosol to the vacuole for intracellular iron storage. Plays an essential role in detoxification of excess iron. Important for parasite survival within macrophages and parasite virulence in vivo. In Toxoplasma gondii (strain ATCC 50861 / VEG), this protein is Vacuolar iron transporter.